Here is a 284-residue protein sequence, read N- to C-terminus: ATP synthase gamma chain (284 aa).

Belongs to the ATPase gamma chain family. As to quaternary structure, F-type ATPases have 2 components, CF(1) - the catalytic core - and CF(0) - the membrane proton channel. CF(1) has five subunits: alpha(3), beta(3), gamma(1), delta(1), epsilon(1). CF(0) has three main subunits: a, b and c.

Its subcellular location is the cell membrane. Its function is as follows. Produces ATP from ADP in the presence of a proton gradient across the membrane. The gamma chain is believed to be important in regulating ATPase activity and the flow of protons through the CF(0) complex. The protein is ATP synthase gamma chain of Pelotomaculum thermopropionicum (strain DSM 13744 / JCM 10971 / SI).